Here is a 326-residue protein sequence, read N- to C-terminus: uncharacterized protein (326 aa).

Serine 132 contributes to the substrate binding site. The Proton acceptor role is filled by tyrosine 157.

It belongs to the NAD(P)-dependent epimerase/dehydratase family. dTDP-glucose dehydratase subfamily.

This is an uncharacterized protein from Methanocaldococcus jannaschii (strain ATCC 43067 / DSM 2661 / JAL-1 / JCM 10045 / NBRC 100440) (Methanococcus jannaschii).